Reading from the N-terminus, the 285-residue chain is UDP-3-O-acyl-N-acetylglucosamine deacetylase (285 aa).

3 residues coordinate Zn(2+): His-89, His-243, and Asp-247. His-270 serves as the catalytic Proton donor.

It belongs to the LpxC family. The cofactor is Zn(2+).

The enzyme catalyses a UDP-3-O-[(3R)-3-hydroxyacyl]-N-acetyl-alpha-D-glucosamine + H2O = a UDP-3-O-[(3R)-3-hydroxyacyl]-alpha-D-glucosamine + acetate. The protein operates within glycolipid biosynthesis; lipid IV(A) biosynthesis; lipid IV(A) from (3R)-3-hydroxytetradecanoyl-[acyl-carrier-protein] and UDP-N-acetyl-alpha-D-glucosamine: step 2/6. Catalyzes the hydrolysis of UDP-3-O-myristoyl-N-acetylglucosamine to form UDP-3-O-myristoylglucosamine and acetate, the committed step in lipid A biosynthesis. This chain is UDP-3-O-acyl-N-acetylglucosamine deacetylase, found in Thermosynechococcus vestitus (strain NIES-2133 / IAM M-273 / BP-1).